Consider the following 164-residue polypeptide: FMN reductase (NADH) RutF (164 aa).

It belongs to the non-flavoprotein flavin reductase family. RutF subfamily.

The enzyme catalyses FMNH2 + NAD(+) = FMN + NADH + 2 H(+). Catalyzes the reduction of FMN to FMNH2 which is used to reduce pyrimidine by RutA via the Rut pathway. The protein is FMN reductase (NADH) RutF of Klebsiella variicola (strain At-22).